The sequence spans 340 residues: Glutamyl-tRNA reductase (340 aa).

Residues 49–52 (TCNR), serine 108, 113–115 (ETE), and glutamine 119 contribute to the substrate site. Cysteine 50 (nucleophile) is an active-site residue. 188 to 193 (GAGEMS) contacts NADP(+).

This sequence belongs to the glutamyl-tRNA reductase family. Homodimer.

The enzyme catalyses (S)-4-amino-5-oxopentanoate + tRNA(Glu) + NADP(+) = L-glutamyl-tRNA(Glu) + NADPH + H(+). It functions in the pathway porphyrin-containing compound metabolism; protoporphyrin-IX biosynthesis; 5-aminolevulinate from L-glutamyl-tRNA(Glu): step 1/2. Catalyzes the NADPH-dependent reduction of glutamyl-tRNA(Glu) to glutamate 1-semialdehyde (GSA). This Akkermansia muciniphila (strain ATCC BAA-835 / DSM 22959 / JCM 33894 / BCRC 81048 / CCUG 64013 / CIP 107961 / Muc) protein is Glutamyl-tRNA reductase.